A 654-amino-acid chain; its full sequence is MFSQNMIIRDGEYTKTIYTMIKEERFQDAINTLNTIPESSTTRAGLSLLGHCYYQTQDFIEAANCYEHLLNLVPDVQEYRLYYAQSLFQAGLFEEAQKIIATGLDSPELKEKVLQLQSAIAYGNEDYTAAQSLLLQRQDGNGQEASTKNDEGCLLYQANMYEDALQRYVSALQAGGFNPHVAYNAALCHYRRKENSQALNYIAEIVERGIRNHPELGVGAQAETEGGARSVGNPPALAASGLAQAFNLKAAIEYQEGNADGAREALTDLPPRSEPELDPVTLHNMALTDPTGGGAGLRRLAFLLELGPPACPPETFANLLLLCCKHEMYDTAADILAEHTHLTYKYLSPYLYDLLDALITAQSTPEEAEQKLGTLASSIGGRLRALAAKVQECRSATDQNALRMALREYEGALESYLPVAMARAWIPWRMDDFQGAEREFRASAEFCSETPSWRLHAAHVLFMRGDRYKEAAAFYEPIVRQNYDDILSIPASVLANLCVAYIMTSQNEEAEELMRKVERAEERKGNATGQCLHLCIVNLVIGTLYCAKNNYEFGLSRIAHALDGGSGARLCADTWIHVKRCVLGLLTGMAKQTIVLPSIALQETLNFLRACEAYGLTIPSVLTGPLEDSGEQPPTIGLEARKLRALLLRLMEYK.

TPR repeat units follow at residues 10-43, 44-76, 145-178, 180-212, 393-426, 452-485, and 535-568; these read DGEY…STTR, AGLS…VPDV, ASTK…GGFN, HVAY…GIRN, CRSA…RAWI, SWRL…NYDD, and CIVN…GSGA.

Belongs to the TTC30/dfy-1/fleer family.

The protein localises to the cell projection. It is found in the cilium. Functionally, required for polyglutamylation of axonemal tubulin in sensory cilia. Plays a role in anterograde intraflagellar transport (IFT), the process by which cilia precursors are transported from the base of the cilium to the site of their incorporation at the tip. The protein is Tetratricopeptide repeat protein 30 homolog of Anopheles gambiae (African malaria mosquito).